The sequence spans 321 residues: Phospho-N-acetylmuramoyl-pentapeptide-transferase (321 aa).

Helical transmembrane passes span 1-21 (MIFV…PVLI), 50-70 (MGGL…IIFV), 76-96 (IILL…DDYI), 112-132 (FLAQ…FHLV), 140-160 (IPFT…IVFW), 176-196 (GLAT…SFVL), 200-220 (AIGI…PYNI), 225-245 (VFMG…ISIM), 250-270 (LSLI…MLQV), and 300-320 (VVTV…WIGV).

Belongs to the glycosyltransferase 4 family. MraY subfamily. It depends on Mg(2+) as a cofactor.

The protein resides in the cell membrane. It catalyses the reaction UDP-N-acetyl-alpha-D-muramoyl-L-alanyl-gamma-D-glutamyl-L-lysyl-D-alanyl-D-alanine + di-trans,octa-cis-undecaprenyl phosphate = Mur2Ac(oyl-L-Ala-gamma-D-Glu-L-Lys-D-Ala-D-Ala)-di-trans,octa-cis-undecaprenyl diphosphate + UMP. Its pathway is cell wall biogenesis; peptidoglycan biosynthesis. Its function is as follows. Catalyzes the initial step of the lipid cycle reactions in the biosynthesis of the cell wall peptidoglycan: transfers peptidoglycan precursor phospho-MurNAc-pentapeptide from UDP-MurNAc-pentapeptide onto the lipid carrier undecaprenyl phosphate, yielding undecaprenyl-pyrophosphoryl-MurNAc-pentapeptide, known as lipid I. The polypeptide is Phospho-N-acetylmuramoyl-pentapeptide-transferase (Staphylococcus aureus (strain MSSA476)).